A 263-amino-acid polypeptide reads, in one-letter code: Endonuclease 8 (263 aa).

The active-site Schiff-base intermediate with DNA is P2. E3 functions as the Proton donor in the catalytic mechanism. K53 serves as the catalytic Proton donor; for beta-elimination activity. Residues Q70, R125, and N169 each coordinate DNA. The segment at K229–H263 adopts an FPG-type zinc-finger fold. R253 (proton donor; for delta-elimination activity) is an active-site residue.

It belongs to the FPG family. Zn(2+) serves as cofactor.

It catalyses the reaction 2'-deoxyribonucleotide-(2'-deoxyribose 5'-phosphate)-2'-deoxyribonucleotide-DNA = a 3'-end 2'-deoxyribonucleotide-(2,3-dehydro-2,3-deoxyribose 5'-phosphate)-DNA + a 5'-end 5'-phospho-2'-deoxyribonucleoside-DNA + H(+). Its function is as follows. Involved in base excision repair of DNA damaged by oxidation or by mutagenic agents. Acts as a DNA glycosylase that recognizes and removes damaged bases. Has a preference for oxidized pyrimidines, such as thymine glycol, 5,6-dihydrouracil and 5,6-dihydrothymine. Has AP (apurinic/apyrimidinic) lyase activity and introduces nicks in the DNA strand. Cleaves the DNA backbone by beta-delta elimination to generate a single-strand break at the site of the removed base with both 3'- and 5'-phosphates. This is Endonuclease 8 from Escherichia coli (strain K12 / MC4100 / BW2952).